We begin with the raw amino-acid sequence, 557 residues long: Dihydroxy-acid dehydratase (557 aa).

Aspartate 78 lines the Mg(2+) pocket. Position 119 (cysteine 119) interacts with [2Fe-2S] cluster. Mg(2+)-binding residues include aspartate 120 and lysine 121. The residue at position 121 (lysine 121) is an N6-carboxylysine. Cysteine 192 contributes to the [2Fe-2S] cluster binding site. Glutamate 443 provides a ligand contact to Mg(2+). Residue serine 469 is the Proton acceptor of the active site.

This sequence belongs to the IlvD/Edd family. As to quaternary structure, homodimer. The cofactor is [2Fe-2S] cluster. It depends on Mg(2+) as a cofactor.

It catalyses the reaction (2R)-2,3-dihydroxy-3-methylbutanoate = 3-methyl-2-oxobutanoate + H2O. The enzyme catalyses (2R,3R)-2,3-dihydroxy-3-methylpentanoate = (S)-3-methyl-2-oxopentanoate + H2O. The protein operates within amino-acid biosynthesis; L-isoleucine biosynthesis; L-isoleucine from 2-oxobutanoate: step 3/4. It functions in the pathway amino-acid biosynthesis; L-valine biosynthesis; L-valine from pyruvate: step 3/4. In terms of biological role, functions in the biosynthesis of branched-chain amino acids. Catalyzes the dehydration of (2R,3R)-2,3-dihydroxy-3-methylpentanoate (2,3-dihydroxy-3-methylvalerate) into 2-oxo-3-methylpentanoate (2-oxo-3-methylvalerate) and of (2R)-2,3-dihydroxy-3-methylbutanoate (2,3-dihydroxyisovalerate) into 2-oxo-3-methylbutanoate (2-oxoisovalerate), the penultimate precursor to L-isoleucine and L-valine, respectively. The protein is Dihydroxy-acid dehydratase of Persephonella marina (strain DSM 14350 / EX-H1).